The sequence spans 351 residues: Cell shape-determining protein MreB (351 aa).

ATP contacts are provided by residues 20-22, 169-171, 217-220, and 299-302; these read TAN, GGT, ERIK, and GGAL.

It belongs to the FtsA/MreB family. In terms of assembly, forms polymers.

It is found in the cytoplasm. Its function is as follows. Forms membrane-associated dynamic filaments that are essential for cell shape determination. Acts by regulating cell wall synthesis and cell elongation, and thus cell shape. A feedback loop between cell geometry and MreB localization may maintain elongated cell shape by targeting cell wall growth to regions of negative cell wall curvature. The polypeptide is Cell shape-determining protein MreB (Pasteurella multocida (strain Pm70)).